The chain runs to 260 residues: Late transcription factor 1 (260 aa).

This sequence belongs to the chordopoxvirinae VLTF-1 family. Interacts with the late transcription factors VLTF-2 and VLTF-3. Interacts with the late transcription elongation factor VLTF-4. Interacts with itself.

In terms of biological role, associates with RNA polymerase to initiate transcription from late gene promoters. The protein is Late transcription factor 1 (OPG093) of Vaccinia virus (strain Ankara) (VACV).